The following is a 513-amino-acid chain: Glucose-1-phosphate adenylyltransferase small subunit, chloroplastic/amyloplastic (513 aa).

The N-terminal 64 residues, Met-1–Ala-64, are a transit peptide targeting the chloroplast.

The protein belongs to the bacterial/plant glucose-1-phosphate adenylyltransferase family. In terms of assembly, heterotetramer. Leaves and starchy endosperm.

Its subcellular location is the plastid. The protein resides in the chloroplast. It localises to the amyloplast. It carries out the reaction alpha-D-glucose 1-phosphate + ATP + H(+) = ADP-alpha-D-glucose + diphosphate. Its pathway is glycan biosynthesis; starch biosynthesis. Activated by 3'phosphoglycerate, inhibited by orthophosphate. Allosteric regulation. In terms of biological role, this protein plays a role in synthesis of starch. It catalyzes the synthesis of the activated glycosyl donor, ADP-glucose from Glc-1-P and ATP. The protein is Glucose-1-phosphate adenylyltransferase small subunit, chloroplastic/amyloplastic of Hordeum vulgare (Barley).